Reading from the N-terminus, the 95-residue chain is Aspartyl/glutamyl-tRNA(Asn/Gln) amidotransferase subunit C (95 aa).

Belongs to the GatC family. As to quaternary structure, heterotrimer of A, B and C subunits.

The catalysed reaction is L-glutamyl-tRNA(Gln) + L-glutamine + ATP + H2O = L-glutaminyl-tRNA(Gln) + L-glutamate + ADP + phosphate + H(+). It carries out the reaction L-aspartyl-tRNA(Asn) + L-glutamine + ATP + H2O = L-asparaginyl-tRNA(Asn) + L-glutamate + ADP + phosphate + 2 H(+). Functionally, allows the formation of correctly charged Asn-tRNA(Asn) or Gln-tRNA(Gln) through the transamidation of misacylated Asp-tRNA(Asn) or Glu-tRNA(Gln) in organisms which lack either or both of asparaginyl-tRNA or glutaminyl-tRNA synthetases. The reaction takes place in the presence of glutamine and ATP through an activated phospho-Asp-tRNA(Asn) or phospho-Glu-tRNA(Gln). In Nitratidesulfovibrio vulgaris (strain DSM 19637 / Miyazaki F) (Desulfovibrio vulgaris), this protein is Aspartyl/glutamyl-tRNA(Asn/Gln) amidotransferase subunit C.